A 602-amino-acid chain; its full sequence is Replication protein E1 (602 aa).

Residues 79–81 carry the Nuclear localization signal motif; it reads KRK. Residues Ser-85 and Ser-92 each carry the phosphoserine; by host modification. The Nuclear export signal motif lies at 91 to 100; the sequence is LSPRLQCISI. Residues 142–305 are DNA-binding region; it reads QGAKGLGIVK…TMINHQTAEA (164 aa). An SF3 helicase domain is found at 404–554; it reads INFIQFLDSF…FPFDSDNNPQ (151 aa). 430–437 contributes to the ATP binding site; sequence GPPDTGKS.

The protein belongs to the papillomaviridae E1 protein family. As to quaternary structure, can form hexamers. Interacts with E2 protein; this interaction increases E1 DNA binding specificity. Interacts with host DNA polymerase subunit POLA2. Interacts with host single stranded DNA-binding protein RPA1. Interacts with host TOP1; this interaction stimulates the enzymatic activity of TOP1. Post-translationally, phosphorylated.

Its subcellular location is the host nucleus. It carries out the reaction Couples ATP hydrolysis with the unwinding of duplex DNA by translocating in the 3'-5' direction.. The catalysed reaction is ATP + H2O = ADP + phosphate + H(+). Its function is as follows. ATP-dependent DNA 3'-5' helicase required for initiation of viral DNA replication. It forms a complex with the viral E2 protein. The E1-E2 complex binds to the replication origin which contains binding sites for both proteins. During the initial step, a dimer of E1 interacts with a dimer of protein E2 leading to a complex that binds the viral origin of replication with high specificity. Then, a second dimer of E1 displaces the E2 dimer in an ATP-dependent manner to form the E1 tetramer. Following this, two E1 monomers are added to each half of the site, which results in the formation of two E1 trimers on the viral ori. Subsequently, two hexamers will be created. The double hexamer acts as a bi-directional helicase machinery and unwinds the viral DNA and then recruits the host DNA polymerase to start replication. The chain is Replication protein E1 from Homo sapiens (Human).